The sequence spans 522 residues: Putative glucosylceramidase 3 (522 aa).

The signal sequence occupies residues 1-21 (MSRWKVVILCLLSFMFEIGHA). The active-site Proton donor is the E259. E364 acts as the Nucleophile in catalysis.

Belongs to the glycosyl hydrolase 30 family.

It carries out the reaction a beta-D-glucosylceramide + H2O = an N-acyl-sphingoid base + D-glucose. The enzyme catalyses a beta-D-glucosyl-(1&lt;-&gt;1')-N-acylsphing-4-enine + H2O = an N-acylsphing-4-enine + D-glucose. The catalysed reaction is an N-acyl-1-beta-D-glucosyl-15-methylhexadecasphing-4-enine + H2O = an N-acyl-15-methylhexadecasphing-4-enine + D-glucose. It functions in the pathway lipid metabolism; sphingolipid metabolism. Its function is as follows. Glucosylceramidase that catalyzes the hydrolysis of glucosylceramides into free ceramides and glucose. C.elegans contain specific sphingoid bases, which are unique or different in structure compared to the sphingoid bases found in other animals. Two examples of these distinctive compounds are: 15-methylhexadecasphinganine and 15-methylhexadecasphing-4-enine. The sequence is that of Putative glucosylceramidase 3 from Caenorhabditis elegans.